Consider the following 134-residue polypeptide: Large ribosomal subunit protein uL22 (134 aa).

This sequence belongs to the universal ribosomal protein uL22 family. Part of the 50S ribosomal subunit. Contacts protein L32.

In terms of biological role, this protein binds specifically to 23S rRNA; its binding is stimulated by other ribosomal proteins, e.g. L4, L17, and L20. It is important during the early stages of 50S assembly. It makes multiple contacts with different domains of the 23S rRNA in the assembled 50S subunit and ribosome. Its function is as follows. The globular domain of the protein is located by the polypeptide exit tunnel on the outside of the subunit while an extended beta-hairpin forms part of the wall of the tunnel. Forms a pair of 'tweezers' with L32 that hold together two different domains of the 23S rRNA. Interacts with the tunnel-blocking modified macrolide azithromycin. Upon binding of the macrolide troleadomycin to the ribosome, the tip of the beta-hairpin is displaced, which severely restricts the tunnel. This and experiments in E.coli have led to the suggestion that it is part of the gating mechanism involved in translation arrest in the absence of the protein export system. In Deinococcus radiodurans (strain ATCC 13939 / DSM 20539 / JCM 16871 / CCUG 27074 / LMG 4051 / NBRC 15346 / NCIMB 9279 / VKM B-1422 / R1), this protein is Large ribosomal subunit protein uL22 (rplV).